The following is a 719-amino-acid chain: NF-kappa-B inhibitor zeta (719 aa).

Positions 46–81 (GACDGGCSASGPSAPGSPGSDSSDFSSASSVSSCGA) are enriched in low complexity. A disordered region spans residues 46-97 (GACDGGCSASGPSAPGSPGSDSSDFSSASSVSSCGAVESRPRGGARAERLQV). A compositionally biased stretch (basic and acidic residues) spans 84–97 (SRPRGGARAERLQV). Residues 108-130 (RGPFQGVRVKNSVKELLLHIRSH) form the OCA domain. The short motif at 164-179 (KRKGSDSLSDGPACKR) is the Nuclear localization signal element. Disordered regions lie at residues 188-210 (LTPPQTPTPAESMEDVHHNESKQ) and 289-343 (YSPQ…FAPL). The segment covering 201-210 (EDVHHNESKQ) has biased composition (basic and acidic residues). Residues 322–394 (SYEPHLFGRE…LARPDASSTP (73 aa)) form a required for transcriptional activity region. The interval 405 to 719 (GGNPMSTTQL…KSIQQRAPPY (315 aa)) is interaction with NFKB1/p50. 7 ANK repeats span residues 444-473 (DGDTFLHIAVAQGRRALSYVLARKMNALHM), 480-509 (NGQSAFQVAVAANQHLIVQDLVTLGAQVNT), 513-542 (WGRTPLHVCAEKGHSQVLQAIQKGAAGSNQ), 552-581 (DGLTPLHCAVLAHNAVVHELQRNQQPHSPE), 583-608 (QELLLKNKSLVDTIKCLIQMGAAVEA), 613-642 (SGRTALHLAAEEANLELIRLFLELPSCLSF), and 649-682 (NGNTALHVAASLQYRVTQLDAVRLLMRKGADPST).

In terms of assembly, interacts with NFKB1/p50. Interacts with RELA. Interacts with AKIRIN2.

The protein resides in the nucleus. Involved in regulation of NF-kappa-B transcription factor complexes. Inhibits NF-kappa-B activity without affecting its nuclear translocation upon stimulation. Inhibits DNA-binding of RELA and NFKB1/p50, and of the NF-kappa-B p65-p50 heterodimer and the NF-kappa-B p50-p50 homodimer. Also seems to activate NF-kappa-B-mediated transcription. In vitro, upon association with NFKB1/p50 has transcriptional activation activity and, together with NFKB1/p50 and RELA, is recruited to LCN2 promoters. Promotes transcription of LCN2 and DEFB4. Is recruited to IL-6 promoters and activates IL-6 but decreases TNF-alpha production in response to LPS. Seems to be involved in the induction of inflammatory genes activated through TLR/IL-1 receptor signaling. Involved in the induction of T helper 17 cells (Th17) differentiation upon recognition of antigen by T cell antigen receptor (TCR). In Bos taurus (Bovine), this protein is NF-kappa-B inhibitor zeta (NFKBIZ).